Reading from the N-terminus, the 463-residue chain is MMITLILFTVGMATTTLLIPSNKLWAGAIFQSALLSLLSLIVLNNHWTASWHNLSSILASDTISAPLIILSCWLAPIALIASKGQLNNSSDLGSRVFIIMIIVITGALIITFSSLELILFYIVVETTLIPTLILITRWGAQMERCQAGLYFMFYTLFGSLPLLIAIIAIYISSSSLSIPNVNLLWANDGSIESLTMWWALSINCFFNNLPVYGFHLWLPKAHVEAPVAGSMILAAILLKIGGYGLMRLIALFSTISMNALSLALIVFCTWGALITSVICVRQTDLKALIAYSSVGHMSIVAAAIFSETSWGMNGALMLMVAHGLVSSALFSLANTVYERSGTRTLAITRGLKLLLPLSTLWWLLMCAANLGLPPSPNLIGEILILSSLISWSVWLFPIVGFAQVFGAIYSLMIFQLSQQGTPFTSIINVFSSFSREHLFAALHILPLILIMINPFSALIAWLK.

The next 13 helical transmembrane spans lie at 24–44 (LWAGAIFQSALLSLLSLIVLN), 62–82 (TISAPLIILSCWLAPIALIAS), 98–118 (IIMIIVITGALIITFSSLELI), 119–139 (LFYIVVETTLIPTLILITRWG), 151–171 (FMFYTLFGSLPLLIAIIAIYI), 198–218 (WALSINCFFNNLPVYGFHLWL), 232–252 (ILAAILLKIGGYGLMRLIALF), 260–280 (LSLALIVFCTWGALITSVICV), 285–305 (LKALIAYSSVGHMSIVAAAIF), 310–330 (WGMNGALMLMVAHGLVSSALF), 353–373 (LLLPLSTLWWLLMCAANLGLP), 404–424 (VFGAIYSLMIFQLSQQGTPFT), and 442–462 (LHILPLILIMINPFSALIAWL).

Belongs to the complex I subunit 4 family.

Its subcellular location is the mitochondrion membrane. The catalysed reaction is a ubiquinone + NADH + 5 H(+)(in) = a ubiquinol + NAD(+) + 4 H(+)(out). Functionally, core subunit of the mitochondrial membrane respiratory chain NADH dehydrogenase (Complex I) that is believed to belong to the minimal assembly required for catalysis. Complex I functions in the transfer of electrons from NADH to the respiratory chain. The immediate electron acceptor for the enzyme is believed to be ubiquinone. This chain is NADH-ubiquinone oxidoreductase chain 4 (ND4), found in Strongylocentrotus purpuratus (Purple sea urchin).